The primary structure comprises 568 residues: Potassium-transporting ATPase potassium-binding subunit (568 aa).

Transmembrane regions (helical) follow at residues 7-27 (ITIG…GGFL), 65-85 (HYAL…YAIL), 136-156 (GLTV…AAII), 179-199 (LYVL…EGIP), 254-274 (LTNF…TNVF), 285-305 (WAVF…VYWA), 332-352 (FGVA…CGAV), 354-374 (AMHE…MMLG), 377-397 (IIGG…IAVF), 423-443 (MLAV…AVVV), 487-507 (ITLG…ALAI), and 530-550 (LFIG…FLPA).

This sequence belongs to the KdpA family. The system is composed of three essential subunits: KdpA, KdpB and KdpC.

It is found in the cell inner membrane. Its function is as follows. Part of the high-affinity ATP-driven potassium transport (or Kdp) system, which catalyzes the hydrolysis of ATP coupled with the electrogenic transport of potassium into the cytoplasm. This subunit binds the periplasmic potassium ions and delivers the ions to the membrane domain of KdpB through an intramembrane tunnel. The polypeptide is Potassium-transporting ATPase potassium-binding subunit (Granulibacter bethesdensis (strain ATCC BAA-1260 / CGDNIH1)).